Here is a 329-residue protein sequence, read N- to C-terminus: GTPase Obg (329 aa).

One can recognise an Obg domain in the interval 1-159; sequence MQFIDEAKIF…MWVWLHLKLL (159 aa). The OBG-type G domain maps to 160–327; sequence SDVGLVGLPN…LLANILSELQ (168 aa). Residues 166 to 173, 191 to 195, 212 to 215, 279 to 282, and 308 to 310 each bind GTP; these read GLPNAGKS, FTTLT, DIPG, TKTD, and SSY. Residues Ser173 and Thr193 each contribute to the Mg(2+) site.

The protein belongs to the TRAFAC class OBG-HflX-like GTPase superfamily. OBG GTPase family. Monomer. Mg(2+) serves as cofactor.

It is found in the cytoplasm. Functionally, an essential GTPase which binds GTP, GDP and possibly (p)ppGpp with moderate affinity, with high nucleotide exchange rates and a fairly low GTP hydrolysis rate. Plays a role in control of the cell cycle, stress response, ribosome biogenesis and in those bacteria that undergo differentiation, in morphogenesis control. The polypeptide is GTPase Obg (Orientia tsutsugamushi (strain Ikeda) (Rickettsia tsutsugamushi)).